Reading from the N-terminus, the 1411-residue chain is DNA-directed RNA polymerase subunit beta' (1411 aa).

Residues Cys70, Cys72, Cys85, and Cys88 each coordinate Zn(2+). Residues Asp458, Asp460, and Asp462 each coordinate Mg(2+). Zn(2+) is bound by residues Cys813, Cys887, Cys894, and Cys897. The disordered stretch occupies residues 1384–1411 (AEAAEMATTGSDEAPEVEGSGVESGSAE).

This sequence belongs to the RNA polymerase beta' chain family. The RNAP catalytic core consists of 2 alpha, 1 beta, 1 beta' and 1 omega subunit. When a sigma factor is associated with the core the holoenzyme is formed, which can initiate transcription. Requires Mg(2+) as cofactor. Zn(2+) serves as cofactor.

It carries out the reaction RNA(n) + a ribonucleoside 5'-triphosphate = RNA(n+1) + diphosphate. In terms of biological role, DNA-dependent RNA polymerase catalyzes the transcription of DNA into RNA using the four ribonucleoside triphosphates as substrates. In Paracidovorax citrulli (strain AAC00-1) (Acidovorax citrulli), this protein is DNA-directed RNA polymerase subunit beta'.